The chain runs to 124 residues: Protein MGF 110-8L (124 aa).

A signal peptide spans 1 to 16; it reads MKVLILVLLAVVILQA. N-linked (GlcNAc...) asparagine; by host glycans are attached at residues Asn-76 and Asn-94.

This sequence belongs to the asfivirus MGF 110 family.

Its function is as follows. Plays a role in virus cell tropism, and may be required for efficient virus replication in macrophages. The sequence is that of Protein MGF 110-8L from Ornithodoros (relapsing fever ticks).